We begin with the raw amino-acid sequence, 173 residues long: Thaumatin-like protein PWIR2 (173 aa).

The first 20 residues, Met1 to Ala20, serve as a signal peptide directing secretion.

It belongs to the thaumatin family.

In Triticum aestivum (Wheat), this protein is Thaumatin-like protein PWIR2.